Reading from the N-terminus, the 371-residue chain is Alanine dehydrogenase (371 aa).

2 residues coordinate substrate: arginine 15 and lysine 75. Histidine 96 (proton donor/acceptor) is an active-site residue. Residues serine 134, 178 to 179, aspartate 198, serine 220, 239 to 240, 267 to 270, arginine 279, and 298 to 301 contribute to the NAD(+) site; these read TA, VL, IAID, and VANM. The active-site Proton donor/acceptor is aspartate 270.

Belongs to the AlaDH/PNT family. Homohexamer. Trimer of dimers.

The protein resides in the cytoplasm. It catalyses the reaction L-alanine + NAD(+) + H2O = pyruvate + NH4(+) + NADH + H(+). It participates in amino-acid degradation; L-alanine degradation via dehydrogenase pathway; NH(3) and pyruvate from L-alanine: step 1/1. In terms of biological role, catalyzes the reversible reductive amination of pyruvate to L-alanine. Required for proficient utilization of D- or L-alanine as a nitrogen source. May be required for the adaptation from aerobic growth to anaerobic dormancy. It could be involved in the maintenance of the NAD pool during the shift to an anaerobic dormant state in which oxygen as a terminal electron acceptor becomes limiting. In Mycolicibacterium smegmatis (strain ATCC 700084 / mc(2)155) (Mycobacterium smegmatis), this protein is Alanine dehydrogenase.